Consider the following 158-residue polypeptide: Probable inactive acireductone dioxygenase 2 (158 aa).

The protein belongs to the acireductone dioxygenase (ARD) family.

Its subcellular location is the cytoplasm. It localises to the nucleus. Functionally, probable inactive acireductone dioxygenase. The chain is Probable inactive acireductone dioxygenase 2 from Caenorhabditis elegans.